A 332-amino-acid polypeptide reads, in one-letter code: L-lactate dehydrogenase A-like 6A (332 aa).

Ala-2 is modified (N-acetylalanine). N6-acetyllysine; alternate is present on residues Lys-5 and Lys-57. Lys-5 is modified (N6-succinyllysine; alternate). 29-57 (GSVGVACAISILLKGLSDELVLVDVDEGK) contacts NAD(+). Lys-57 is covalently cross-linked (Glycyl lysine isopeptide (Lys-Gly) (interchain with G-Cter in SUMO2); alternate). Position 81 is an N6-acetyllysine (Lys-81). An NAD(+)-binding site is contributed by Arg-99. Arg-106 serves as a coordination point for substrate. Lys-118 carries the post-translational modification N6-acetyllysine; alternate. Lys-118 carries the N6-succinyllysine; alternate modification. Asn-138 lines the NAD(+) pocket. The substrate site is built by Asn-138 and Arg-169. The Proton acceptor role is filled by His-193. N6-acetyllysine is present on Lys-232. Residue Tyr-239 is modified to Phosphotyrosine. N6-acetyllysine is present on Lys-243. Thr-248 lines the substrate pocket. Thr-309 bears the Phosphothreonine mark. Lys-318 is subject to N6-acetyllysine; alternate. Lys-318 carries the post-translational modification N6-succinyllysine; alternate. At Thr-322 the chain carries Phosphothreonine.

This sequence belongs to the LDH/MDH superfamily. LDH family. Testis-specific.

It localises to the cytoplasm. The enzyme catalyses (S)-lactate + NAD(+) = pyruvate + NADH + H(+). The protein operates within fermentation; pyruvate fermentation to lactate; (S)-lactate from pyruvate: step 1/1. Functionally, catalyzes the interconversion of L-lactate and pyruvate with nicotinamide adenine dinucleotide NAD(+) as a coenzyme. Significantly increases the transcriptional activity of JUN, when overexpressed. This Homo sapiens (Human) protein is L-lactate dehydrogenase A-like 6A (LDHAL6A).